An 865-amino-acid polypeptide reads, in one-letter code: Protein translocase subunit SecA (865 aa).

Residues Gln-93, 111 to 115 (GEGKT), and Asp-501 contribute to the ATP site. Cys-841, Cys-843, Cys-852, and Cys-853 together coordinate Zn(2+).

This sequence belongs to the SecA family. Monomer and homodimer. Part of the essential Sec protein translocation apparatus which comprises SecA, SecYEG and auxiliary proteins SecDF-YajC and YidC. Zn(2+) serves as cofactor.

It is found in the cell inner membrane. Its subcellular location is the cytoplasm. It carries out the reaction ATP + H2O + cellular proteinSide 1 = ADP + phosphate + cellular proteinSide 2.. Part of the Sec protein translocase complex. Interacts with the SecYEG preprotein conducting channel. Has a central role in coupling the hydrolysis of ATP to the transfer of proteins into and across the cell membrane, serving as an ATP-driven molecular motor driving the stepwise translocation of polypeptide chains across the membrane. This is Protein translocase subunit SecA from Helicobacter pylori (strain G27).